Consider the following 335-residue polypeptide: 2-acylglycerol O-acyltransferase 2-B (335 aa).

The next 2 helical transmembrane spans lie at 24–44 (WAVSFLAMAQCCIALYILLLF) and 104–124 (YIMGFHPHGVLVVGAFGNFCT). N206 is a glycosylation site (N-linked (GlcNAc...) asparagine).

The protein belongs to the diacylglycerol acyltransferase family.

It is found in the endoplasmic reticulum membrane. It localises to the cytoplasm. The protein localises to the perinuclear region. The enzyme catalyses a 2-acylglycerol + an acyl-CoA = a 1,2-diacylglycerol + CoA. The catalysed reaction is a 2-acylglycerol + an acyl-CoA = a 1,2-diacyl-sn-glycerol + CoA. It carries out the reaction a 2-acylglycerol + an acyl-CoA = a 2,3-diacyl-sn-glycerol + CoA. It catalyses the reaction a 1-acylglycerol + an acyl-CoA = a 1,2-diacylglycerol + CoA. The enzyme catalyses a 1-acylglycerol + an acyl-CoA = a 1,3-diacylglycerol + CoA. The catalysed reaction is 1-O-alkylglycerol + an acyl-CoA = 1-O-alkyl-3-acylglycerol + CoA. It carries out the reaction an acyl-CoA + a 1,2-diacyl-sn-glycerol = a triacyl-sn-glycerol + CoA. It participates in glycerolipid metabolism; triacylglycerol biosynthesis. Functionally, catalyzes the formation of diacylglycerol from 2-monoacylglycerol and fatty acyl-CoA. In terms of biological role, involved in glycerolipid synthesis and lipid metabolism. Catalyzes the formation of diacylglycerol, the precursor of triacylglycerol, by transferring the acyl chain of a fatty acyl-CoA to a monoacylglycerol. Plays a central role in absorption of dietary fat in the small intestine by catalyzing the resynthesis of triacylglycerol in enterocytes. Has a preference toward monoacylglycerols containing unsaturated fatty acids in an order of C18:3 &gt; C18:2 &gt; C18:1 &gt; C18:0 at sn-2. Able to use 1-monoalkylglycerol (1-MAkG, 1-O-alkylglycerol) as an acyl acceptor for the synthesis of monoalkyl-monoacylglycerol (MAMAG, 1-O-alkyl-3-acylglycerol or 1-O-alkyl-2-acylglycerol) and subsequently, with lower efficiency, may add another acyl chain producing monoalkyl-diacylglycerol (MADAG, 1-O-alkyl-2,3-diacylglycerol). Possesses weak but significant activity with diacylglycerol as substrate, producing triacylglycerol (triacyl-sn-glycerol). The chain is 2-acylglycerol O-acyltransferase 2-B (mogat2-b) from Xenopus laevis (African clawed frog).